The chain runs to 171 residues: NADH-quinone oxidoreductase subunit C (171 aa).

Belongs to the complex I 30 kDa subunit family. As to quaternary structure, NDH-1 is composed of 14 different subunits. Subunits NuoB, C, D, E, F, and G constitute the peripheral sector of the complex.

The protein resides in the cell membrane. The enzyme catalyses a quinone + NADH + 5 H(+)(in) = a quinol + NAD(+) + 4 H(+)(out). In terms of biological role, NDH-1 shuttles electrons from NADH, via FMN and iron-sulfur (Fe-S) centers, to quinones in the respiratory chain. The immediate electron acceptor for the enzyme in this species is believed to be ubiquinone. Couples the redox reaction to proton translocation (for every two electrons transferred, four hydrogen ions are translocated across the cytoplasmic membrane), and thus conserves the redox energy in a proton gradient. The chain is NADH-quinone oxidoreductase subunit C from Herpetosiphon aurantiacus (strain ATCC 23779 / DSM 785 / 114-95).